Consider the following 150-residue polypeptide: Cyclin-dependent kinases regulatory subunit (150 aa).

Residues 115 to 137 show a composition bias toward low complexity; sequence AAAQQQQQQQQQQQQQQQQHQTQ. The segment at 115–150 is disordered; it reads AAAQQQQQQQQQQQQQQQQHQTQSISNDMQVPPQIS.

Belongs to the CKS family. Forms a stable but non-covalent complex with the CDC28 protein and with a cyclin.

In terms of biological role, binds to the catalytic subunit of the cyclin dependent kinase (CDC28) and is essential for its biological function. In Saccharomyces cerevisiae (strain ATCC 204508 / S288c) (Baker's yeast), this protein is Cyclin-dependent kinases regulatory subunit.